The sequence spans 374 residues: Chaperone protein DnaJ (374 aa).

The region spanning 5–70 is the J domain; sequence DYYEVLGLEK…DKKANYDRFG (66 aa). Residues 137–219 form a CR-type zinc finger; sequence GVEKSINITR…CHGAGHVRKK (83 aa). Cys150, Cys153, Cys167, Cys170, Cys193, Cys196, Cys207, and Cys210 together coordinate Zn(2+). 4 CXXCXGXG motif repeats span residues 150–157, 167–174, 193–200, and 207–214; these read CETCGGTG, CDKCGGTG, CDKCGGRG, and CHECHGAG.

The protein belongs to the DnaJ family. As to quaternary structure, homodimer. Requires Zn(2+) as cofactor.

It localises to the cytoplasm. In terms of biological role, participates actively in the response to hyperosmotic and heat shock by preventing the aggregation of stress-denatured proteins and by disaggregating proteins, also in an autonomous, DnaK-independent fashion. Unfolded proteins bind initially to DnaJ; upon interaction with the DnaJ-bound protein, DnaK hydrolyzes its bound ATP, resulting in the formation of a stable complex. GrpE releases ADP from DnaK; ATP binding to DnaK triggers the release of the substrate protein, thus completing the reaction cycle. Several rounds of ATP-dependent interactions between DnaJ, DnaK and GrpE are required for fully efficient folding. Also involved, together with DnaK and GrpE, in the DNA replication of plasmids through activation of initiation proteins. This is Chaperone protein DnaJ from Clostridium acetobutylicum (strain ATCC 824 / DSM 792 / JCM 1419 / IAM 19013 / LMG 5710 / NBRC 13948 / NRRL B-527 / VKM B-1787 / 2291 / W).